Here is an 80-residue protein sequence, read N- to C-terminus: Sec-independent protein translocase protein TatA (80 aa).

A helical membrane pass occupies residues M1–T21. Residues K39 to S80 form a disordered region. A compositionally biased stretch (basic and acidic residues) spans S67–S80.

The protein belongs to the TatA/E family. In terms of assembly, the Tat system comprises two distinct complexes: a TatABC complex, containing multiple copies of TatA, TatB and TatC subunits, and a separate TatA complex, containing only TatA subunits. Substrates initially bind to the TatABC complex, which probably triggers association of the separate TatA complex to form the active translocon.

It is found in the cell inner membrane. Its function is as follows. Part of the twin-arginine translocation (Tat) system that transports large folded proteins containing a characteristic twin-arginine motif in their signal peptide across membranes. TatA could form the protein-conducting channel of the Tat system. This is Sec-independent protein translocase protein TatA from Hahella chejuensis (strain KCTC 2396).